Consider the following 601-residue polypeptide: MISMGMTSKGQNVDGAPAGNSSSEWIISSSSSPFQANKRYSLDPPFGSDYSPPASPQNELDPLSSYFLNLQSEDNDVRKTAIEYIINTLSNPDNEKLIKNHLPMIVVLSTESPFDDISEAFTNFLKPIQEKYHIPKQRTTVFTSESQLPPLNTDDELTRKLFQDVFLQHGRVNHLTRILGWHPQYLEKFLLAYNTIMRDPGPLPLHWRNYIGILAAARYKCSYIIALQEHEFLMNNGDARWLQGIDHIPAKLKNLLKVIELLAHQPWLLPKLDIEYLVKGTDAWSIAELVHAMVLICTFLSLSGFVFCCGISPECGLSESNNLSSSFSLNDSDCEIEDTAATENTAKVMELLKNRRSQQQDDDDDDQLHDRQQDFHNAGDDSQSSNNNTTTTTTTTTTTTTTTNTNTTSNSAGGGDSSSSTLSQSSDRMSDFSRYIGNNTMTHTDFDVSSKLYNIFSAQEYSWREHGYELVSRYFPDAAPLLDEEFSFVYTMTYYKFNNNTDIDTLPFRRAVWYYVQRVKGMLHDDYNYQEVNMFLSRSLKNFVKKAVCFPETIKRDDYSKLGYSLKPDEKCHLSLLAVCSHKQASLLYGLYSVMNYQNRR.

Polar residues predominate over residues 1-11; that stretch reads MISMGMTSKGQ. A disordered region spans residues 1 to 58; sequence MISMGMTSKGQNVDGAPAGNSSSEWIISSSSSPFQANKRYSLDPPFGSDYSPPASPQN. Asn20 carries N-linked (GlcNAc...) asparagine glycosylation. Positions 21 to 32 are enriched in low complexity; it reads SSSEWIISSSSS. N-linked (GlcNAc...) asparagine glycosylation is found at Asn322 and Asn330. A disordered region spans residues 355–425; the sequence is RRSQQQDDDD…DSSSSTLSQS (71 aa). The span at 368–379 shows a compositional bias: basic and acidic residues; sequence LHDRQQDFHNAG. The segment covering 380 to 425 has biased composition (low complexity); it reads DDSQSSNNNTTTTTTTTTTTTTTTNTNTTSNSAGGGDSSSSTLSQS. N-linked (GlcNAc...) asparagine glycans are attached at residues Asn387, Asn388, Asn406, Asn438, and Asn499.

The protein belongs to the sestrin family.

It localises to the nucleus. It is found in the cytoplasm. Its function is as follows. May function as a negative feedback regulator of TOR function. The sequence is that of Sestrin homolog from Dictyostelium discoideum (Social amoeba).